A 334-amino-acid polypeptide reads, in one-letter code: MGFHHVGQAGLELLTSGHPALERRPEYLEERRIKEIVKKHSQFIGYPITLFVEKKRNKQVSDAEAEKKEDKRKKKKESNDKPEIEDVGSDEEEEKKDADKKKKKSKEKYIDQELNKTKPIWTRNPDAITNEEYGEFHQSLTNNWEDHLAVKHFSVEGQLEELKDSRRVMKANQKHIYYITGETKDQVANSAFVECLQKHGLEVIYMIELIDKYCVQQLKELESKTVVSVAKEGLELPEDEEEKKKQEEKKTKFENLCKIMKDMLEKKVKKVVVSNCMEDPQRHTNKIYRMIKLGLGVDEYDPTANDINAAITKEMPPLRGGDDTSRMEEVGGSG.

Residues 55 to 107 (KRNKQVSDAEAEKKEDKRKKKKESNDKPEIEDVGSDEEEEKKDADKKKKKSKE) form a disordered region. The span at 59 to 69 (QVSDAEAEKKE) shows a compositional bias: basic and acidic residues. The span at 85-94 (EDVGSDEEEE) shows a compositional bias: acidic residues. Ser-89 is modified (phosphoserine). Positions 234–267 (LELPEDEEEKKKQEEKKTKFENLCKIMKDMLEKK) form a coiled coil. A disordered region spans residues 314–334 (EMPPLRGGDDTSRMEEVGGSG). Residues 320–334 (GGDDTSRMEEVGGSG) are compositionally biased toward basic and acidic residues. The short motif at 327 to 331 (MEEVG) is the TPR repeat-binding element.

The protein belongs to the heat shock protein 90 family. In terms of assembly, homodimer.

The protein resides in the cytoplasm. Functionally, putative molecular chaperone that may promote the maturation, structural maintenance and proper regulation of specific target proteins. The polypeptide is Putative heat shock protein HSP 90-alpha A5 (HSP90AA5P) (Homo sapiens (Human)).